The chain runs to 193 residues: Imidazoleglycerol-phosphate dehydratase (193 aa).

It belongs to the imidazoleglycerol-phosphate dehydratase family.

It localises to the cytoplasm. The catalysed reaction is D-erythro-1-(imidazol-4-yl)glycerol 3-phosphate = 3-(imidazol-4-yl)-2-oxopropyl phosphate + H2O. It participates in amino-acid biosynthesis; L-histidine biosynthesis; L-histidine from 5-phospho-alpha-D-ribose 1-diphosphate: step 6/9. The chain is Imidazoleglycerol-phosphate dehydratase from Saccharolobus islandicus (strain Y.G.57.14 / Yellowstone #1) (Sulfolobus islandicus).